The following is a 1006-amino-acid chain: E3 ubiquitin-protein ligase MIB1 (1006 aa).

The 69-residue stretch at N6–A74 folds into the MIB/HERC2 1 domain. The ZZ-type zinc finger occupies H80 to S132. Residues C85, C88, C100, C103, C109, C112, H118, and H122 each contribute to the Zn(2+) site. The region spanning S143–A221 is the MIB/HERC2 2 domain. S408 is subject to Phosphoserine. 9 ANK repeats span residues D430–G460, A463–A492, D496–A525, R529–L558, E562–I591, N595–E627, D631–I661, N665–I694, and D698–A729. RING-type zinc fingers lie at residues C819–K854 and C866–R901. Residues Q935–M962 are a coiled coil. The RING-type 3 zinc-finger motif lies at C963–R996.

As to quaternary structure, interacts with CEP131 and PCM1. In terms of processing, ubiquitinated; this modification is inhibited in response to cellular stress, such as ultraviolet light (UV) radiation or heat shock. Ubiquitinated; possibly via autoubiquitination. Detected in all tissues tested. Present in embryo, embryonic stem cells, bladder, skeletal muscle, bladder, uterus, testis, stomach, colon, ileum, trachea, lung, aorta, kidney, spleen, liver and vas deferens (at protein level). Highly expressed in testis.

Its subcellular location is the cytoplasm. The protein localises to the cytoskeleton. It localises to the microtubule organizing center. It is found in the centrosome. The protein resides in the centriolar satellite. Its subcellular location is the cell membrane. It carries out the reaction S-ubiquitinyl-[E2 ubiquitin-conjugating enzyme]-L-cysteine + [acceptor protein]-L-lysine = [E2 ubiquitin-conjugating enzyme]-L-cysteine + N(6)-ubiquitinyl-[acceptor protein]-L-lysine.. It participates in protein modification; protein ubiquitination. In terms of biological role, E3 ubiquitin-protein ligase that mediates ubiquitination of Delta receptors, which act as ligands of Notch proteins. Positively regulates the Delta-mediated Notch signaling by ubiquitinating the intracellular domain of Delta, leading to endocytosis of Delta receptors. Involved in ubiquitination of centriolar satellite CEP131, CEP290 and PCM1 proteins and hence inhibits primary cilium formation in proliferating cells. Mediates 'Lys-63'-linked polyubiquitination of TBK1, which probably participates in kinase activation. Probably mediates ubiquitination and subsequent proteasomal degradation of DAPK1, thereby antagonizing anti-apoptotic effects of DAPK1 to promote TNF-induced apoptosis. The sequence is that of E3 ubiquitin-protein ligase MIB1 (Mib1) from Mus musculus (Mouse).